We begin with the raw amino-acid sequence, 534 residues long: 5'-nucleotidase domain-containing protein 3 (534 aa).

D104 functions as the Nucleophile in the catalytic mechanism. Residues D104 and D106 each coordinate Mg(2+). D106 acts as the Proton donor in catalysis. Position 234 to 242 (234 to 242 (KEAIRDVHV)) interacts with substrate. Residue D372 participates in Mg(2+) binding.

The protein belongs to the 5'(3')-deoxyribonucleotidase family. Mg(2+) serves as cofactor.

This Xenopus tropicalis (Western clawed frog) protein is 5'-nucleotidase domain-containing protein 3 (nt5dc3).